Consider the following 72-residue polypeptide: UPF0729 protein C18orf32 homolog (72 aa).

The segment at 1-33 (MVCIPCIVIPVLLWIFKKFLEPYIYPVVSRIWP) is necessary for its localzation to the endoplasmic reticulum and lipid droplets. The disordered stretch occupies residues 45-72 (TGKVDCKGADTNGFSTKGPTEVSDKKKD).

This sequence belongs to the UPF0729 family. In terms of assembly, interacts with DERL1 and AMFR. In terms of processing, undergoes ER-associated degradation (ERAD).

Its subcellular location is the endoplasmic reticulum. The protein localises to the lipid droplet. May activate the NF-kappa-B signaling pathway. The polypeptide is UPF0729 protein C18orf32 homolog (Rattus norvegicus (Rat)).